A 657-amino-acid polypeptide reads, in one-letter code: Methionine--tRNA ligase (657 aa).

The 'HIGH' region motif lies at 13–23 (YYPSGNLHIGH). Residues 308–312 (KMSKS) carry the 'KMSKS' region motif. Residue lysine 311 participates in ATP binding. The region spanning 557–657 (DFDKVEIKAA…SAIPNGAVIK (101 aa)) is the tRNA-binding domain.

Belongs to the class-I aminoacyl-tRNA synthetase family. MetG type 2B subfamily. Homodimer.

The protein localises to the cytoplasm. It carries out the reaction tRNA(Met) + L-methionine + ATP = L-methionyl-tRNA(Met) + AMP + diphosphate. In terms of biological role, is required not only for elongation of protein synthesis but also for the initiation of all mRNA translation through initiator tRNA(fMet) aminoacylation. In Staphylococcus aureus (strain Mu50 / ATCC 700699), this protein is Methionine--tRNA ligase.